A 62-amino-acid chain; its full sequence is Lepidopteran-selective toxin (62 aa).

The N-terminal stretch at 1-24 is a signal peptide; the sequence is MKFLYGVILIALFLTVMTATLSEA. Intrachain disulfides connect Cys26–Cys43, Cys29–Cys51, Cys40–Cys56, and Cys44–Cys58. A propeptide is located at residue Tyr62.

The protein belongs to the short scorpion toxin superfamily. Chloride channel inhibitor family. Expressed by the venom gland.

Its subcellular location is the secreted. Toxin with unknown function in healthy organisms. On glioma cells, interacts with chloride channels (probably ClC-3/CLCN3) and MMP2 at the surface of glioma cells. This complex is then internalized via caveolae, thus inhibiting the chloride channels necessary for cell shrinkage and tumor propagation. Induces flaccid paralysis in H.virescens larvae. Is not toxic to S.falculata larvae or mice. The protein is Lepidopteran-selective toxin of Hottentotta tamulus (Eastern Indian scorpion).